The chain runs to 393 residues: Putative odorant receptor 69a, isoform A (393 aa).

Residues 1–39 are Cytoplasmic-facing; the sequence is MQLHDHMKYIDLGCKMACIPRYQWKGRPTERQFYASEQR. Residues 40-60 form a helical membrane-spanning segment; sequence IVFLLGTICQIFQITGVLIYW. Residues 61–76 lie on the Extracellular side of the membrane; it reads YCNGRLATETGTFVAQ. The helical transmembrane segment at 77–97 threads the bilayer; it reads LSEMCSSFCLTFVGFCNVYAI. Residues 98–139 lie on the Cytoplasmic side of the membrane; sequence STNRNQIETLLEELHQIYPRYRKNHYRCQHYFDMAMTIMRIE. The helical transmembrane segment at 140–160 threads the bilayer; that stretch reads FLFYMILYVYYNSAPLWVLLW. The Extracellular portion of the chain corresponds to 161-189; the sequence is EHLHEEYDLSFKTQTNTWFPWKVHGSALG. A helical transmembrane segment spans residues 190 to 210; it reads FGMAVLSITVGSFVGVGFSIV. The Cytoplasmic segment spans residues 211-269; sequence TQNLICLLTFQLKLHYDGISSQLVSLDCRRPGAHKELSILIAHHSRILQLGDQVNDIMN. A helical transmembrane segment spans residues 270 to 290; the sequence is FVFGSSLVGATIAICMSSVSI. The Extracellular segment spans residues 291-304; that stretch reads MLLDLASAFKYASG. The helical transmembrane segment at 305 to 325 threads the bilayer; that stretch reads LVAFVLYNFVICYMGTEVTLA. At 326–365 the chain is on the cytoplasmic side; the sequence is SGKVLPAAFYNNWYEGDLVYRRMLLILMMRATKPYMWKTY. Residues 366–386 form a helical membrane-spanning segment; it reads KLAPVSITTYMATLKFSYQMF. Topologically, residues 387 to 393 are extracellular; it reads TCVRSLK.

Belongs to the insect chemoreceptor superfamily. Heteromeric odorant receptor channel (TC 1.A.69) family. Or49a subfamily. In terms of assembly, interacts with Orco. Complexes exist early in the endomembrane system in olfactory sensory neurons (OSNs), coupling these complexes to the conserved ciliary trafficking pathway. Expressed in olfactory sensory neurons in the antenna.

The protein localises to the cell membrane. Functionally, odorant receptor which mediates acceptance or avoidance behavior, depending on its substrates. The odorant receptor repertoire encodes a large collection of odor stimuli that vary widely in identity, intensity, and duration. May form a complex with Orco to form odorant-sensing units, providing sensitive and prolonged odorant signaling and calcium permeability. This chain is Putative odorant receptor 69a, isoform A (Or69a), found in Drosophila melanogaster (Fruit fly).